The following is a 924-amino-acid chain: Protein argonaute 4 (924 aa).

2 disordered regions span residues Met-1–Val-37 and Thr-159–Asn-185. Positions Leu-26–Val-37 are enriched in pro residues. Over residues Asn-162–Pro-173 the composition is skewed to low complexity. In terms of domain architecture, PAZ spans Pro-292–Pro-408. A Piwi domain is found at Phe-577–Lys-885. A Nuclear localization signal motif is present at residues Asp-584 to Tyr-591.

This sequence belongs to the argonaute family. Ago subfamily. Interacts with NRPE1 (via C-terminus). Binding to NRPE1 is required for its function in RdDM. Interacts with turnip crinkle virus (TCV) capsid protein P38; this interaction inhibits probably RNA silencing ability of AGO4. Interacts with SDE3. Binds to RDM3. Binds chromatin at loci subject to transcriptional silencing. Interacts with MBD6. Expressed in embryos, mature leaves, vascular tissue of the sepals, stamens and stigma, at the tip of the style and siliques.

Its subcellular location is the nucleus. It is found in the nucleolus. It localises to the nucleoplasm. The protein resides in the cajal body. Together with RDM3, required for transcriptional gene silencing (TGS) by DNA methylation and repressive histone modifications (H3K9me2) of several chromatin loci. Component of the RISC complex that associate with the small interfering RNA (siRNA) pathway involved in direct cytosine methylation at endogenous DNA repeats. Forms a AGO4/NRPE1/siRNA complex in cajal body, facilitating its function in RNA-directed gene silencing of target loci. Required for CpNpG and asymmetric DNA methylation as well as histone H3 'Lys-9' methylation (H3K9me) at SUP and SN1 loci. May be not required for CpG methylation. Required for the production and maintenance of retrotransposon SN1 and Copia and ribosomal 5S 25 nucleotide siRNAs specialized in gene silencing at chromatin level. Involved in de novo methylation of FWA gene and required for the maintenance of RNA-directed DNA methylation (RdDM) triggered by inverted repeat transgenes. Interacts with miRNA miR390 and miR172, targeting respectively TAS3 and AP2 mRNAs, and mediates cleavage of miRNA targets. Associates mainly with small RNAs of 24 nucleotide in length and preferentially recruits small RNAs with a 5' terminal adenosine. Targeted by the turnip yellows virus (TuYV) protein P0 (via F-box-like domain) for probable proteasome degradation and thereby inactivating AGO4 function in RNA silencing. Required for resistance to the bacterial pathogen P.syringae. Works independently of the RdDM pathway in mediating resistance to P.syringae. RdDM is involved in viral genome methylation as an epigenetic defense against geminiviruses. The protein is Protein argonaute 4 of Arabidopsis thaliana (Mouse-ear cress).